The sequence spans 171 residues: Phosphopantetheine adenylyltransferase (171 aa).

Residue T10 coordinates substrate. ATP contacts are provided by residues 10–11 and H18; that span reads TF. Substrate-binding residues include K42, T74, and R88. Residues 89–91, E99, and 124–130 contribute to the ATP site; these read GLR and WACLSSK.

Belongs to the bacterial CoaD family. As to quaternary structure, homohexamer. Mg(2+) is required as a cofactor.

The protein localises to the cytoplasm. The catalysed reaction is (R)-4'-phosphopantetheine + ATP + H(+) = 3'-dephospho-CoA + diphosphate. The protein operates within cofactor biosynthesis; coenzyme A biosynthesis; CoA from (R)-pantothenate: step 4/5. Reversibly transfers an adenylyl group from ATP to 4'-phosphopantetheine, yielding dephospho-CoA (dPCoA) and pyrophosphate. This chain is Phosphopantetheine adenylyltransferase, found in Blochmanniella pennsylvanica (strain BPEN).